We begin with the raw amino-acid sequence, 123 residues long: uncharacterized protein (123 aa).

The segment at 34-123 (PEKISQTVKK…MNRDGGVKKE (90 aa)) is disordered. 3 stretches are compositionally biased toward basic and acidic residues: residues 50-60 (KKIDENKDKSP), 74-100 (TAKD…EFSQ), and 107-123 (EETR…VKKE).

Its subcellular location is the mitochondrion. This is an uncharacterized protein from Schizosaccharomyces pombe (strain 972 / ATCC 24843) (Fission yeast).